Here is an 810-residue protein sequence, read N- to C-terminus: RING finger protein unkempt homolog (810 aa).

Residues 1–24 (MSKGPGPGGSAASSAPPAATAQVL) form a disordered region. Residues 10–19 (SAASSAPPAA) show a composition bias toward low complexity. 5 consecutive C3H1-type zinc fingers follow at residues 84 to 113 (YSPDVYCTKYDEATGLCPEGDECPFLHRTT), 124 to 154 (YYKTGICIHETDSKGNCTKNGLHCAFAHGPH), 215 to 241 (NYKTEPCKKPPRLCRQGYACPYYHNSK), 251 to 285 (KYRSSPCPNVKHGDEWGDPGKCENGDACQYCHTRT), and 293 to 321 (IYKSTKCNDMQQSGSCPRGPFCAFAHVEQ). A disordered region spans residues 239 to 265 (NSKDRRRSPRKHKYRSSPCPNVKHGDE). Residue serine 240 is modified to Phosphoserine. The span at 241–253 (KDRRRSPRKHKYR) shows a compositional bias: basic residues. The interval 324–343 (LSDDLQPSSTVSSPTQPGPV) is disordered. Over residues 329 to 343 (QPSSTVSSPTQPGPV) the composition is skewed to low complexity. Phosphoserine is present on residues serine 374, serine 378, and serine 385. Residues 569–585 (SASFHSASPSPPVSLSS) show a composition bias toward low complexity. The segment at 569-602 (SASFHSASPSPPVSLSSHFLQQPQGHLSQSENTF) is disordered. A compositionally biased stretch (polar residues) spans 586-602 (HFLQQPQGHLSQSENTF). Phosphoserine is present on serine 631. Positions 643 to 723 (GAAELARLRQ…QEELERLHSG (81 aa)) form a coiled coil. The segment at 766-801 (SVKCLKCQEQNRAVLPCQHAVLCELCAEGSECPVCQ) adopts an RING-type; degenerate zinc-finger fold.

The protein belongs to the unkempt family.

The protein localises to the cytoplasm. Its function is as follows. Sequence-specific RNA-binding protein which plays an important role in the establishment and maintenance of the early morphology of cortical neurons during embryonic development. Acts as a translation repressor and controls a translationally regulated cell morphology program to ensure proper structuring of the nervous system. Translational control depends on recognition of its binding element within target mRNAs which consists of a mandatory UAG trimer upstream of a U/A-rich motif. Associated with polysomes. The chain is RING finger protein unkempt homolog (UNK) from Canis lupus familiaris (Dog).